The sequence spans 461 residues: Fumarate hydratase class II (461 aa).

Residues 97–99, 127–130, 137–139, and Thr-185 each bind substrate; these read SGT, HPND, and SSN. His-186 functions as the Proton donor/acceptor in the catalytic mechanism. The active site involves Ser-316. Substrate is bound by residues Ser-317 and 322 to 324; that span reads KVN.

This sequence belongs to the class-II fumarase/aspartase family. Fumarase subfamily. Homotetramer.

The protein localises to the cytoplasm. It catalyses the reaction (S)-malate = fumarate + H2O. It participates in carbohydrate metabolism; tricarboxylic acid cycle; (S)-malate from fumarate: step 1/1. In terms of biological role, involved in the TCA cycle. Catalyzes the stereospecific interconversion of fumarate to L-malate. This Staphylococcus saprophyticus subsp. saprophyticus (strain ATCC 15305 / DSM 20229 / NCIMB 8711 / NCTC 7292 / S-41) protein is Fumarate hydratase class II.